Reading from the N-terminus, the 29-residue chain is MDIVSLAWAALMVVFSFSLSLVVWGRSGL.

The chain crosses the membrane as a helical span at residues 3-23; it reads IVSLAWAALMVVFSFSLSLVV.

This sequence belongs to the PetN family. The 4 large subunits of the cytochrome b6-f complex are cytochrome b6, subunit IV (17 kDa polypeptide, PetD), cytochrome f and the Rieske protein, while the 4 small subunits are PetG, PetL, PetM and PetN. The complex functions as a dimer.

The protein resides in the plastid. It is found in the chloroplast thylakoid membrane. Functionally, component of the cytochrome b6-f complex, which mediates electron transfer between photosystem II (PSII) and photosystem I (PSI), cyclic electron flow around PSI, and state transitions. The protein is Cytochrome b6-f complex subunit 8 of Glycine max (Soybean).